A 100-amino-acid chain; its full sequence is Urease subunit gamma (100 aa).

This sequence belongs to the urease gamma subunit family. In terms of assembly, heterotrimer of UreA (gamma), UreB (beta) and UreC (alpha) subunits. Three heterotrimers associate to form the active enzyme.

Its subcellular location is the cytoplasm. The catalysed reaction is urea + 2 H2O + H(+) = hydrogencarbonate + 2 NH4(+). It participates in nitrogen metabolism; urea degradation; CO(2) and NH(3) from urea (urease route): step 1/1. The chain is Urease subunit gamma from Actinobacillus pleuropneumoniae (Haemophilus pleuropneumoniae).